We begin with the raw amino-acid sequence, 766 residues long: 5-methyltetrahydropteroyltriglutamate--homocysteine methyltransferase (766 aa).

Residues 16–19 and lysine 119 contribute to the 5-methyltetrahydropteroyltri-L-glutamate site; that span reads RELK. Residues 440 to 442 and glutamate 493 each bind L-homocysteine; that span reads IGS. Residues 440-442 and glutamate 493 each bind L-methionine; that span reads IGS. 5-methyltetrahydropteroyltri-L-glutamate contacts are provided by residues 524-525 and tryptophan 570; that span reads RC. Aspartate 608 provides a ligand contact to L-homocysteine. L-methionine is bound at residue aspartate 608. Glutamate 614 contacts 5-methyltetrahydropteroyltri-L-glutamate. 3 residues coordinate Zn(2+): histidine 650, cysteine 652, and glutamate 674. Histidine 703 acts as the Proton donor in catalysis. Cysteine 735 provides a ligand contact to Zn(2+).

It belongs to the vitamin-B12 independent methionine synthase family. It depends on Zn(2+) as a cofactor.

The enzyme catalyses 5-methyltetrahydropteroyltri-L-glutamate + L-homocysteine = tetrahydropteroyltri-L-glutamate + L-methionine. It participates in amino-acid biosynthesis; L-methionine biosynthesis via de novo pathway; L-methionine from L-homocysteine (MetE route): step 1/1. Its function is as follows. Catalyzes the transfer of a methyl group from 5-methyltetrahydrofolate to homocysteine resulting in methionine formation. The protein is 5-methyltetrahydropteroyltriglutamate--homocysteine methyltransferase of Pseudomonas aeruginosa (strain UCBPP-PA14).